We begin with the raw amino-acid sequence, 643 residues long: Threonine--tRNA ligase (643 aa).

In terms of domain architecture, TGS spans 1–61; that stretch reads MPIITLPDGS…EQDATLEIIT (61 aa). The segment at 243 to 534 is catalytic; it reads DHRKIGKALD…ITEEYAGFFP (292 aa). Zn(2+) is bound by residues Cys-334, His-385, and His-511.

The protein belongs to the class-II aminoacyl-tRNA synthetase family. Homodimer. Zn(2+) serves as cofactor.

It localises to the cytoplasm. The catalysed reaction is tRNA(Thr) + L-threonine + ATP = L-threonyl-tRNA(Thr) + AMP + diphosphate + H(+). Its function is as follows. Catalyzes the attachment of threonine to tRNA(Thr) in a two-step reaction: L-threonine is first activated by ATP to form Thr-AMP and then transferred to the acceptor end of tRNA(Thr). Also edits incorrectly charged L-seryl-tRNA(Thr). This is Threonine--tRNA ligase from Haemophilus influenzae (strain ATCC 51907 / DSM 11121 / KW20 / Rd).